A 439-amino-acid chain; its full sequence is MATRAARVWSGWWLLLLPLLGLAGASGPRTLVLLDNLNLRETHSLFFRSLKDRGFVLTFKTADDPSLSLIKYGEFLYDNLIIFSPSVEDFGGNINVETISAFIDGGGSVLVAASSDIGDPLRELGSECGIEFDEEKTAVIDHHNYDVSDLGQHTLIVADTENLLKAPTIVGKSSLNPILFRGVGMVADPDNPLVLDILTGSSTSYSFFPDKPITQYPHAVGKNTLLIAGLQARNNARVIFSGSLDFFSDAFFNSAVQKAAPGSQRYSQTGNYELAVALSRWVFKEEGVLRVGPVSHHRVGETAPPNAYTVTDLVEYSIVIEQLSDGKWVPFDGDDIQLEFVRIDPFVRTFLKRKGGKYSVQFKLPDVYGVFQFKVDYNRLGYTHLYSSTQVSVRPLQHTQYERFIPSAYPYYASAFSMMLGLFIFSVVFLHMKEKEKSD.

An N-terminal signal peptide occupies residues 1-26 (MATRAARVWSGWWLLLLPLLGLAGAS). Residues 27 to 409 (GPRTLVLLDN…QYERFIPSAY (383 aa)) are Lumenal-facing. A helical transmembrane segment spans residues 410–430 (PYYASAFSMMLGLFIFSVVFL). Residues 431–439 (HMKEKEKSD) lie on the Cytoplasmic side of the membrane.

The protein belongs to the DDOST 48 kDa subunit family. As to quaternary structure, component of the oligosaccharyltransferase (OST) complex. OST exists in two different complex forms which contain common core subunits RPN1, RPN2, OST48, OST4, DAD1 and TMEM258, either STT3A or STT3B as catalytic subunits, and form-specific accessory subunits. STT3A complex assembly occurs through the formation of 3 subcomplexes. Subcomplex 1 contains RPN1 and TMEM258, subcomplex 2 contains the STT3A-specific subunits STT3A, DC2/OSTC, and KCP2 as well as the core subunit OST4, and subcomplex 3 contains RPN2, DAD1, and OST48. The STT3A complex can form stable complexes with the Sec61 complex or with both the Sec61 and TRAP complexes. Interacts with SMIM22.

The protein resides in the endoplasmic reticulum membrane. It participates in protein modification; protein glycosylation. Its function is as follows. Subunit of the oligosaccharyl transferase (OST) complex that catalyzes the initial transfer of a defined glycan (Glc(3)Man(9)GlcNAc(2) in eukaryotes) from the lipid carrier dolichol-pyrophosphate to an asparagine residue within an Asn-X-Ser/Thr consensus motif in nascent polypeptide chains, the first step in protein N-glycosylation. N-glycosylation occurs cotranslationally and the complex associates with the Sec61 complex at the channel-forming translocon complex that mediates protein translocation across the endoplasmic reticulum (ER). All subunits are required for a maximal enzyme activity. Required for the assembly of both SST3A- and SS3B-containing OST complexes. The chain is Dolichyl-diphosphooligosaccharide--protein glycosyltransferase 48 kDa subunit from Bos taurus (Bovine).